A 120-amino-acid chain; its full sequence is UPF0231 protein YE0706 (120 aa).

It belongs to the UPF0231 family.

The polypeptide is UPF0231 protein YE0706 (Yersinia enterocolitica serotype O:8 / biotype 1B (strain NCTC 13174 / 8081)).